The sequence spans 519 residues: Sorting nexin-2 (519 aa).

Positions 30–50 are enriched in low complexity; that stretch reads STVSTLESSPSSPEPASLPAE. The tract at residues 30–62 is disordered; that stretch reads STVSTLESSPSSPEPASLPAEDISANSNGSKPV. Phosphoserine is present on Ser97. Phosphothreonine is present on residues Thr101 and Thr104. Ser117 and Ser119 each carry phosphoserine. One can recognise a PX domain in the interval 140–269; sequence FDIEIGVSDP…QFLESSELPR (130 aa). 4 residues coordinate a 1,2-diacyl-sn-glycero-3-phospho-(1D-myo-inositol-3-phosphate): Arg183, Ser185, Lys211, and Arg235. Residue Ser185 is modified to Phosphoserine. The interaction with RhoG stretch occupies residues 260–519; sequence QFLESSELPR…AFLPEAKAIA (260 aa). A Phosphoserine modification is found at Ser277. Residues 278-295 form a membrane-binding amphipathic helix region; it reads GAGILRMVNKAADAVNKM. A BAR domain is found at 299–519; that stretch reads MNESDAWFEE…AFLPEAKAIA (221 aa). Lys469 is subject to N6-acetyllysine.

Belongs to the sorting nexin family. In terms of assembly, predominantly forms heterodimers with BAR domain-containing sorting nexins SNX5, SNX6 and SNX32; can self-associate to form homodimers. The heterodimers are proposed to self-assemble into helical arrays on the membrane to stabilize and expand local membrane curvature underlying endosomal tubule formation. Thought to be a component of the originally described retromer complex (also called SNX-BAR retromer) which is a pentamer containing the heterotrimeric retromer cargo-selective complex (CSC), also described as vacuolar protein sorting subcomplex (VPS), and a heterodimeric membrane-deforming subcomplex formed between SNX1 or SNX2 and SNX5 or SNX6 (also called SNX-BAR subcomplex); the respective CSC and SNX-BAR subcomplexes associate with low affinity. Interacts with SNX5, SNX6, SNX32, VPS26A, VPS29, VPS35, FNBP1, KALRN, RHOG (GDP-bound form).

It localises to the early endosome membrane. The protein resides in the cell projection. It is found in the lamellipodium. In terms of biological role, involved in several stages of intracellular trafficking. Interacts with membranes containing phosphatidylinositol 3-phosphate (PtdIns(3P)) or phosphatidylinositol 3,5-bisphosphate (PtdIns(3,5)P2). Acts in part as component of the retromer membrane-deforming SNX-BAR subcomplex. The SNX-BAR retromer mediates retrograde transport of cargo proteins from endosomes to the trans-Golgi network (TGN) and is involved in endosome-to-plasma membrane transport for cargo protein recycling. The SNX-BAR subcomplex functions to deform the donor membrane into a tubular profile called endosome-to-TGN transport carrier (ETC). Can sense membrane curvature and has in vitro vesicle-to-membrane remodeling activity. Required for retrograde endosome-to-TGN transport of TGN38. Promotes KALRN- and RHOG-dependent but retromer-independent membrane remodeling such as lamellipodium formation; the function is dependent on GEF activity of KALRN. This Mus musculus (Mouse) protein is Sorting nexin-2 (Snx2).